A 430-amino-acid polypeptide reads, in one-letter code: Asparagine--tRNA ligase (430 aa).

Belongs to the class-II aminoacyl-tRNA synthetase family.

Its subcellular location is the cytoplasm. It catalyses the reaction tRNA(Asn) + L-asparagine + ATP = L-asparaginyl-tRNA(Asn) + AMP + diphosphate + H(+). This is Asparagine--tRNA ligase from Thermococcus gammatolerans (strain DSM 15229 / JCM 11827 / EJ3).